A 136-amino-acid polypeptide reads, in one-letter code: Small ribosomal subunit protein uS9 (136 aa).

The protein belongs to the universal ribosomal protein uS9 family.

The polypeptide is Small ribosomal subunit protein uS9 (Borrelia garinii subsp. bavariensis (strain ATCC BAA-2496 / DSM 23469 / PBi) (Borreliella bavariensis)).